Here is a 90-residue protein sequence, read N- to C-terminus: Acyl-CoA-binding protein (90 aa).

Over residues 1 to 16 (MGLKEDFEEHAEKAKT) the composition is skewed to basic and acidic residues. The segment at 1–20 (MGLKEDFEEHAEKAKTLPEN) is disordered. Positions 3–88 (LKEDFEEHAE…VKQLLGEAAA (86 aa)) constitute an ACB domain. An acyl-CoA contacts are provided by residues 30–34 (YGLYK), Lys56, and Tyr75.

This sequence belongs to the ACBP family.

Binds medium- and long-chain acyl-CoA esters with very high affinity and may function as an intracellular carrier of acyl-CoA esters. The protein is Acyl-CoA-binding protein of Ricinus communis (Castor bean).